A 1068-amino-acid chain; its full sequence is MRGLTPKNGVHIETGPDTESSADSSNFSTGFSGKIRKPRSKVSKACDNCRKRKIKCNGKFPCASCEIYSCECTFSTRQGGARIKNLHKTSLEGTTVQVKEETDSSSTSFSNPQRCTDGPCAVEQPTKFFENFKLGGRSSGDNSGSDGKNDDDVNRNGFYEDDSESQATLTSLQTTLKNLKEMAHLGTHVTSAIESIELQISDLLKRWEPKVRTKELATTKFYPNKSIETQLMKNKYCDVVHLTRYAAWSNNKKDQDTSSQPLIDEIFGLYSPFQFLSLQGIGKCFQNYRSKSKCEIFPRTAKETIYIMLRFFDVCFHHINQGCVSIANPLENYLQKMNLLPSTPSSISSAGSPNTAHTKSHVALVINHLPQPFVRNITGISNSELLSEMNNDISMFGILLKMLDMHKNSYQNFLMEITSNPSVAKNTQSIDVLQEFIHYCQAGEALIALCYSYYNSTLYNYVDFTCDITHLEQLLYFLDLLFWLSEIYGFEKVLNVAVHFVSRVGLSRWEFYVGLDENFAERRRNLWWKAFYFEKTLASKLGYPSNIDDSKINCLLPKNFRDVGFLDNRDFIENVHLVRRSEAFDNMCISDLKYYGELAVLQIVSHFSSSVLFNEKFTSIRNTSKPSVVREKLLFEVLEIFNETEMKYDAIKEQTGKLFDIAFSKDSTELKVSREDKIMASKFVLFYEHHFCRMVNESDNIVARLCVHRRPSILIENLKIYLHKIYKSWTDMNKILLDFDNDYSVYRSFAHYSISCIILVSQAFSVAEFIKVNDVVNMIRVFKRFLDIKIFSENETNEHVFNSQSFKDYTRAFSFLTIVTRIMLLAYGESSSTNLDVISKYIDENAPDLKGIIELVLDTNSCAYRFLLEPVQKSGFHLTVSQMLKNRKFQEPLMSNEDNKQMKHNSGKNLNPDLPSLKTGTSCLLNGIESPQLPFNGRSAPSPVRNNSLPEFAQLPSFRSLSVSDMINPDYAQPTNGQNNTQVQSNKPINAQQQIPTSVQVPFMNTNEINNNNNNNNNNKNNINNINNNNSNNFSATSFNLGTLDEFVNNGDLEDLYSILWSDVYPDS.

The disordered stretch occupies residues 1 to 38 (MRGLTPKNGVHIETGPDTESSADSSNFSTGFSGKIRKP). Residues 17–31 (DTESSADSSNFSTGF) are compositionally biased toward polar residues. Ser-21 bears the Phosphoserine mark. The segment at residues 46-72 (CDNCRKRKIKCNGKFPCASCEIYSCEC) is a DNA-binding region (zn(2)-C6 fungal-type). Disordered stretches follow at residues 95 to 120 (TVQV…DGPC) and 133 to 166 (KLGG…SESQ). Over residues 104 to 114 (SSSTSFSNPQR) the composition is skewed to polar residues. A compositionally biased stretch (low complexity) spans 135 to 146 (GGRSSGDNSGSD). Ser-930, Ser-942, and Ser-948 each carry phosphoserine. Positions 1005 to 1029 (NTNEINNNNNNNNNNKNNINNINNN) are disordered. The short motif at 1054-1062 (EDLYSILWS) is the 9aaTAD element.

It is found in the nucleus. In terms of biological role, positive regulator of proteins involved in permeability. PDR1 and PDR3 jointly control the transcription level of both SNQ2 and PDR5. This is Transcription factor PDR1 (PDR1) from Saccharomyces cerevisiae (strain ATCC 204508 / S288c) (Baker's yeast).